The sequence spans 446 residues: Putrescine N-hydroxylase (446 aa).

Residues F17, D37, S38, K39, W44, and H45 each coordinate FAD. NADP(+) is bound by residues T54, Q56, and R98. Q56 contributes to the FAD binding site. V121 contacts FAD. NADP(+)-binding residues include S199, K223, Y267, and L301. Positions 378, 389, and 391 each coordinate FAD.

The protein belongs to the lysine N(6)-hydroxylase/L-ornithine N(5)-oxygenase family. As to quaternary structure, homotetramer. The cofactor is FAD.

It catalyses the reaction putrescine + NADPH + O2 = N-hydroxyputrescine + NADP(+) + H2O. It functions in the pathway siderophore biosynthesis. N-hydroxylating monooxygenase involved in the biosynthesis of fimsbactin A, the major siderophore produced by A.baumannii. Catalyzes the N-hydroxylation of the aliphatic diamine putrescine into N-hydroxyputrescine (NHP). Putrescine is the preferred substrate, but the enzyme can also catalyze the N-hydroxylation of cadaverine, with 4-fold lower catalytic efficiency. Cannot use lysine or ornithine as substrates. Uses both NADPH and NADH as the reducing cofactor with a preference for NADPH. The polypeptide is Putrescine N-hydroxylase (Acinetobacter baumannii (strain ATCC 17978 / DSM 105126 / CIP 53.77 / LMG 1025 / NCDC KC755 / 5377)).